The chain runs to 181 residues: Large ribosomal subunit protein uL5 (181 aa).

Belongs to the universal ribosomal protein uL5 family. As to quaternary structure, part of the 50S ribosomal subunit; contacts the 5S rRNA and probably tRNA. Forms a bridge to the 30S subunit in the 70S ribosome.

Functionally, this is one of the proteins that bind and probably mediate the attachment of the 5S RNA into the large ribosomal subunit, where it forms part of the central protuberance. In the 70S ribosome it contacts protein S13 of the 30S subunit (bridge B1b), connecting the 2 subunits; this bridge is implicated in subunit movement. May contact the P site tRNA; the 5S rRNA and some of its associated proteins might help stabilize positioning of ribosome-bound tRNAs. This is Large ribosomal subunit protein uL5 from Methanococcus maripaludis (strain DSM 14266 / JCM 13030 / NBRC 101832 / S2 / LL).